Reading from the N-terminus, the 223-residue chain is Endonuclease V (223 aa).

Mg(2+)-binding residues include Asp35 and Asp103.

This sequence belongs to the endonuclease V family. Mg(2+) serves as cofactor.

It is found in the cytoplasm. The catalysed reaction is Endonucleolytic cleavage at apurinic or apyrimidinic sites to products with a 5'-phosphate.. In terms of biological role, DNA repair enzyme involved in the repair of deaminated bases. Selectively cleaves double-stranded DNA at the second phosphodiester bond 3' to a deoxyinosine leaving behind the intact lesion on the nicked DNA. The chain is Endonuclease V from Salmonella schwarzengrund (strain CVM19633).